Consider the following 117-residue polypeptide: Immunoglobulin heavy variable 4-28 (117 aa).

The N-terminal stretch at 1–19 is a signal peptide; the sequence is MKHLWFFLLLVAAPRWVLS. Residues 20-44 form a framework-1 region; it reads QVQLQESGPGLVKPSDTLSLTCAVS. Positions 20-117 constitute an Ig-like domain; that stretch reads QVQLQESGPG…VDTAVYYCAR (98 aa). A disulfide bond links Cys41 and Cys115. The tract at residues 45–53 is complementarity-determining-1; sequence GYSISSSNW. The interval 54–70 is framework-2; sequence WGWIRQPPGKGLEWIGY. A complementarity-determining-2 region spans residues 71–77; it reads IYYSGST. A framework-3 region spans residues 78–115; sequence YYNPSLKSRVTMSVDTSKNQFSLKLSSVTAVDTAVYYC. The segment at 116 to 117 is complementarity-determining-3; sequence AR.

Immunoglobulins are composed of two identical heavy chains and two identical light chains; disulfide-linked.

It localises to the secreted. It is found in the cell membrane. Its function is as follows. V region of the variable domain of immunoglobulin heavy chains that participates in the antigen recognition. Immunoglobulins, also known as antibodies, are membrane-bound or secreted glycoproteins produced by B lymphocytes. In the recognition phase of humoral immunity, the membrane-bound immunoglobulins serve as receptors which, upon binding of a specific antigen, trigger the clonal expansion and differentiation of B lymphocytes into immunoglobulins-secreting plasma cells. Secreted immunoglobulins mediate the effector phase of humoral immunity, which results in the elimination of bound antigens. The antigen binding site is formed by the variable domain of one heavy chain, together with that of its associated light chain. Thus, each immunoglobulin has two antigen binding sites with remarkable affinity for a particular antigen. The variable domains are assembled by a process called V-(D)-J rearrangement and can then be subjected to somatic hypermutations which, after exposure to antigen and selection, allow affinity maturation for a particular antigen. This is Immunoglobulin heavy variable 4-28 from Homo sapiens (Human).